A 548-amino-acid polypeptide reads, in one-letter code: Probable malate:quinone oxidoreductase (548 aa).

Positions 521 to 548 are disordered; the sequence is DKPQAADSTPKPQLKPQPVQKEVADIAL. Over residues 530-541 the composition is skewed to low complexity; the sequence is PKPQLKPQPVQK.

This sequence belongs to the MQO family. FAD serves as cofactor.

It carries out the reaction (S)-malate + a quinone = a quinol + oxaloacetate. The protein operates within carbohydrate metabolism; tricarboxylic acid cycle; oxaloacetate from (S)-malate (quinone route): step 1/1. The chain is Probable malate:quinone oxidoreductase from Shigella boydii serotype 4 (strain Sb227).